Here is a 208-residue protein sequence, read N- to C-terminus: Large ribosomal subunit protein bL25 (208 aa).

It belongs to the bacterial ribosomal protein bL25 family. CTC subfamily. Part of the 50S ribosomal subunit; part of the 5S rRNA/L5/L18/L25 subcomplex. Contacts the 5S rRNA. Binds to the 5S rRNA independently of L5 and L18.

Its function is as follows. This is one of the proteins that binds to the 5S RNA in the ribosome where it forms part of the central protuberance. The protein is Large ribosomal subunit protein bL25 of Syntrophotalea carbinolica (strain DSM 2380 / NBRC 103641 / GraBd1) (Pelobacter carbinolicus).